We begin with the raw amino-acid sequence, 301 residues long: tRNA dimethylallyltransferase (301 aa).

Residue 12 to 19 (GPTAVGKT) coordinates ATP. 14-19 (TAVGKT) lines the substrate pocket. Residues 37-40 (DSQQ) form an interaction with substrate tRNA region.

The protein belongs to the IPP transferase family. Monomer. Mg(2+) serves as cofactor.

It carries out the reaction adenosine(37) in tRNA + dimethylallyl diphosphate = N(6)-dimethylallyladenosine(37) in tRNA + diphosphate. Catalyzes the transfer of a dimethylallyl group onto the adenine at position 37 in tRNAs that read codons beginning with uridine, leading to the formation of N6-(dimethylallyl)adenosine (i(6)A). The chain is tRNA dimethylallyltransferase from Streptococcus uberis (strain ATCC BAA-854 / 0140J).